Here is a 120-residue protein sequence, read N- to C-terminus: ATP-dependent Clp protease adapter protein ClpS (120 aa).

Belongs to the ClpS family. In terms of assembly, binds to the N-terminal domain of the chaperone ClpA.

Functionally, involved in the modulation of the specificity of the ClpAP-mediated ATP-dependent protein degradation. The polypeptide is ATP-dependent Clp protease adapter protein ClpS (Pseudomonas savastanoi pv. phaseolicola (strain 1448A / Race 6) (Pseudomonas syringae pv. phaseolicola (strain 1448A / Race 6))).